Consider the following 253-residue polypeptide: Ribonuclease HII (253 aa).

The RNase H type-2 domain maps to 70–253; it reads PLVAGIDEVG…RSFSPVQNAL (184 aa). Asp-76, Glu-77, and Asp-168 together coordinate a divalent metal cation.

It belongs to the RNase HII family. Mn(2+) is required as a cofactor. Requires Mg(2+) as cofactor.

The protein localises to the cytoplasm. It carries out the reaction Endonucleolytic cleavage to 5'-phosphomonoester.. Functionally, endonuclease that specifically degrades the RNA of RNA-DNA hybrids. This is Ribonuclease HII from Latilactobacillus sakei subsp. sakei (strain 23K) (Lactobacillus sakei subsp. sakei).